We begin with the raw amino-acid sequence, 235 residues long: Large ribosomal subunit protein uL3 (235 aa).

The interval 150–189 is disordered; sequence AGGPASHGSGHHRHAGSTGMRSTPGRGLPGGKKAGQMGNE.

It belongs to the universal ribosomal protein uL3 family. Part of the 50S ribosomal subunit. Forms a cluster with proteins L14 and L19.

One of the primary rRNA binding proteins, it binds directly near the 3'-end of the 23S rRNA, where it nucleates assembly of the 50S subunit. In Protochlamydia amoebophila (strain UWE25), this protein is Large ribosomal subunit protein uL3.